Consider the following 413-residue polypeptide: Pyruvate dehydrogenase complex subunit homolog DDB_G0271564, mitochondrial (413 aa).

Residues 1-19 (MNRILKQVSNTKGKGIRFY) constitute a mitochondrion transit peptide. A Peripheral subunit-binding (PSBD) domain is found at 29 to 67 (YMFPSVRRLLVEYGINSSKEVTATGPQNRLLKGDVLAYI).

It belongs to the 2-oxoacid dehydrogenase family.

The protein localises to the mitochondrion. The pyruvate dehydrogenase complex catalyzes the overall conversion of pyruvate to acetyl-CoA and CO(2). It contains multiple copies of three enzymatic components: pyruvate dehydrogenase (E1), dihydrolipoamide acetyltransferase (E2) and lipoamide dehydrogenase (E3). The sequence is that of Pyruvate dehydrogenase complex subunit homolog DDB_G0271564, mitochondrial (pdhX) from Dictyostelium discoideum (Social amoeba).